The following is a 95-amino-acid chain: Aspartyl/glutamyl-tRNA(Asn/Gln) amidotransferase subunit C (95 aa).

Belongs to the GatC family. In terms of assembly, heterotrimer of A, B and C subunits.

It carries out the reaction L-glutamyl-tRNA(Gln) + L-glutamine + ATP + H2O = L-glutaminyl-tRNA(Gln) + L-glutamate + ADP + phosphate + H(+). It catalyses the reaction L-aspartyl-tRNA(Asn) + L-glutamine + ATP + H2O = L-asparaginyl-tRNA(Asn) + L-glutamate + ADP + phosphate + 2 H(+). Allows the formation of correctly charged Asn-tRNA(Asn) or Gln-tRNA(Gln) through the transamidation of misacylated Asp-tRNA(Asn) or Glu-tRNA(Gln) in organisms which lack either or both of asparaginyl-tRNA or glutaminyl-tRNA synthetases. The reaction takes place in the presence of glutamine and ATP through an activated phospho-Asp-tRNA(Asn) or phospho-Glu-tRNA(Gln). The polypeptide is Aspartyl/glutamyl-tRNA(Asn/Gln) amidotransferase subunit C (Methylobacterium sp. (strain 4-46)).